Reading from the N-terminus, the 117-residue chain is MSIKYSSKINKIRTFALSLIFIGVIVMYLGLFFRTSPVIMTLFMLFGMLFLVASGIVYFWIGTLSTRAVQVVCPSCGKVTKMLGRVDLCMFCREPLTLDRELEGKEFDEKYNKKRKS.

A run of 2 helical transmembrane segments spans residues 12 to 32 (IRTF…LGLF) and 42 to 62 (LFML…FWIG).

Belongs to the UPF0295 family.

The protein localises to the cell membrane. In Geobacillus kaustophilus (strain HTA426), this protein is UPF0295 protein GK0479.